Reading from the N-terminus, the 403-residue chain is MAYLRRAATALVLIFQLHLFLSLSNAHNITRILAKDPDFSTFNHYLSATHLADEINRRQTITVLAVDNSAMSSILSNGYSLYQIRNILSLHVLVDYFGTKKLHQITDGSTSTASMFQSTGSATGTSGYINITDIKGGKVAFGVQDDDSKLTAHYVKSVFEKPYNISVLHISQVLTSPEAEAPTASPSDLILTTILEKQGCKAFSDILKSTGADKTFQDTVDGGLTVFCPSDSAVGKFMPKFKSLSPANKTALVLYHGMPVYQSLQMLRSGNGAVNTLATEGNNKFDFTVQNDGEDVTLETDVVTAKVMGTLKDQEPLIVYKIDKVLLPREIYKAVKTSAPAPKSSKKKPKNAEADADGPSADAPSDDDVEVADDKNGAVSAMITRTSNVVTAIVGLCFGVWLM.

The first 26 residues, 1–26 (MAYLRRAATALVLIFQLHLFLSLSNA), serve as a signal peptide directing secretion. FAS1 domains are found at residues 27–174 (HNIT…SQVL) and 187–326 (SDLI…DKVL). N-linked (GlcNAc...) asparagine glycans are attached at residues asparagine 28, asparagine 130, asparagine 164, and asparagine 248. Residues 338 to 371 (SAPAPKSSKKKPKNAEADADGPSADAPSDDDVEV) are disordered. Alanine 378 carries GPI-anchor amidated alanine lipidation. Residues 379-403 (VSAMITRTSNVVTAIVGLCFGVWLM) constitute a propeptide, removed in mature form.

Belongs to the fasciclin-like AGP family. Expressed mainly in flowers and to a lesser extent in leaves and roots.

It is found in the cell membrane. May be a cell surface adhesion protein. This is Fasciclin-like arabinogalactan protein 2 (FLA2) from Arabidopsis thaliana (Mouse-ear cress).